A 341-amino-acid polypeptide reads, in one-letter code: GTP-binding protein GTR2 (341 aa).

GTP contacts are provided by serine 23, serine 24, serine 43, histidine 124, and aspartate 127.

The protein belongs to the GTR/RAG GTP-binding protein family. Heterodimer; with GTR1. Component of the GSE complex composed of GTR1, GTR2, SLM4, MEH1 and LTV1. Component of the EGO complex, at least composed of GTR2, SLM4 and MEH1. Interacts with GTR1; the interaction is direct.

The protein resides in the vacuole membrane. The catalysed reaction is GTP + H2O = GDP + phosphate + H(+). Its function is as follows. GTPase involved in activation of the TORC1 signaling pathway, which promotes growth and represses autophagy in nutrient-rich conditions. Also required for TORC1 inactivation during nitrogen starvation. Required for intracellular sorting of GAP1 out of the endosome. Involved in the regulation of microautophagy. This Saccharomyces cerevisiae (strain ATCC 204508 / S288c) (Baker's yeast) protein is GTP-binding protein GTR2.